We begin with the raw amino-acid sequence, 216 residues long: NKG2-D type II integral membrane protein (216 aa).

The Cytoplasmic portion of the chain corresponds to 1 to 51 (MGWIRGRRSRHSWEMSEFHNYNLDLKKSDFSTRWQKQRCPVVKSKCRENAS). A helical; Signal-anchor for type II membrane protein membrane pass occupies residues 52–72 (PFFFCCFIAVAMGIRFIIMVT). Residues 73–216 (IWSAVFLNSL…NTYICMQRTV (144 aa)) are Extracellular-facing. Intrachain disulfides connect Cys-96/Cys-105 and Cys-99/Cys-110. The 116-residue stretch at 98 to 213 (PCPKNWICYK…STPNTYICMQ (116 aa)) folds into the C-type lectin domain. N-linked (GlcNAc...) asparagine glycosylation is found at Asn-115, Asn-131, Asn-163, and Asn-202. Intrachain disulfides connect Cys-127/Cys-211 and Cys-189/Cys-203.

In terms of assembly, homodimer; disulfide-linked. Heterohexamer composed of two subunits of KLRK1 and four subunits of HCST/DAP10. Interacts (via transmembrane domain) with HCST/DAP10 (via transmembrane domain); the interaction is required for KLRK1 NK cell surface and induces NK cell-mediated cytotoxicity. Can form disulfide-bonded heterodimer with CD94. Interacts with CEACAM1; recruits PTPN6 that dephosphorylates VAV1. Natural killer cells.

It is found in the cell membrane. Functions as an activating and costimulatory receptor involved in immunosurveillance upon binding to various cellular stress-inducible ligands displayed at the surface of autologous tumor cells and virus-infected cells. Provides both stimulatory and costimulatory innate immune responses on activated killer (NK) cells, leading to cytotoxic activity. Acts as a costimulatory receptor for T-cell receptor (TCR) in CD8(+) T-cell-mediated adaptive immune responses by amplifying T-cell activation. Stimulates perforin-mediated elimination of ligand-expressing tumor cells. Signaling involves calcium influx, culminating in the expression of TNF-alpha. Participates in NK cell-mediated bone marrow graft rejection. May play a regulatory role in differentiation and survival of NK cells. Binds to ligands belonging to various subfamilies of MHC class I-related glycoproteins. The sequence is that of NKG2-D type II integral membrane protein (KLRK1) from Pan troglodytes (Chimpanzee).